Here is a 1754-residue protein sequence, read N- to C-terminus: Intraflagellar transport protein 172 homolog (1754 aa).

7 WD repeats span residues 14 to 53 (EQIQRIAGLAWSPNQQRLAIATADRHILLYDDAGERRDKF), 64 to 103 (KNSYVIRGLAFSPDSTKLAVGQSDSIVYVYKLGESWNDKK), 110 to 149 (PQASAVTALIWLTSGSIIAGLEDGKVRALHSKSNKSQSLY), 151 to 190 (GDSICISLAANTKGTGFLSGHNDGTIIRYFMTDEATEPLG), 194 to 232 (QHPVPPFALAWPQGGFCAGGCDQRIVFYDSMGRQLRTFD), 283 to 322 (ACLYTLSSLLWRRDGARLALGSVSGAVLLFESVLRRTVWQ), and 519 to 557 (TLLSNISFVQWVPQSDVVVAQSNSNLAIWYNIDLPEHVT). TPR repeat units follow at residues 623–656 (KAMWHNLALIALEDGNLRVAQRCYAALGNVSKAY), 690–723 (GSDLRTAERIYLEQGDIESALKMYQQLGMWDEAV), 748–781 (SEQQEKAGQVLEEQGDLQQAMSLYMKANKPARAA), 807–840 (SELYELAGDIAHRLSRPEAALALYRKGGAYARAL), 852–885 (TALEEEWGDWLVSRKQLDASINHYIEAGATQKAL), 1041–1074 (RGKLKNAEMHFVASGDWKSAVHMYCSSGRWEDGY), 1140–1166 (DEVHLKIAMSLEDEGKFEAAEAEFLKA), 1167–1199 (NKPREAILMYQHAGDWQAALNVAENHLPDAVGE), 1211–1250 (TSNYKDYEALLLRAHRPDLIIEHYKQESLYEDALRIAEEH), 1282–1315 (SRSYLQKAAEFAKKEQFRKAAECLMQIDSSNAED), and 1698–1733 (FPVRGRQPVTFQGSSNQVNRDVWSKFSVALKMSPGS).

It belongs to the IFT172 family.

Its subcellular location is the cell projection. The protein localises to the cilium. Functionally, required for the maintenance and formation of cilia. The sequence is that of Intraflagellar transport protein 172 homolog from Drosophila melanogaster (Fruit fly).